We begin with the raw amino-acid sequence, 209 residues long: Large ribosomal subunit protein uL3 (209 aa).

Belongs to the universal ribosomal protein uL3 family. As to quaternary structure, part of the 50S ribosomal subunit. Forms a cluster with proteins L14 and L19.

In terms of biological role, one of the primary rRNA binding proteins, it binds directly near the 3'-end of the 23S rRNA, where it nucleates assembly of the 50S subunit. The polypeptide is Large ribosomal subunit protein uL3 (Pelobacter propionicus (strain DSM 2379 / NBRC 103807 / OttBd1)).